Reading from the N-terminus, the 81-residue chain is Small ribosomal subunit protein bS16 (81 aa).

The protein belongs to the bacterial ribosomal protein bS16 family.

In Caldicellulosiruptor saccharolyticus (strain ATCC 43494 / DSM 8903 / Tp8T 6331), this protein is Small ribosomal subunit protein bS16.